Here is a 194-residue protein sequence, read N- to C-terminus: Imidazoleglycerol-phosphate dehydratase (194 aa).

It belongs to the imidazoleglycerol-phosphate dehydratase family.

Its subcellular location is the cytoplasm. The catalysed reaction is D-erythro-1-(imidazol-4-yl)glycerol 3-phosphate = 3-(imidazol-4-yl)-2-oxopropyl phosphate + H2O. The protein operates within amino-acid biosynthesis; L-histidine biosynthesis; L-histidine from 5-phospho-alpha-D-ribose 1-diphosphate: step 6/9. The polypeptide is Imidazoleglycerol-phosphate dehydratase (Bacillus cereus (strain B4264)).